We begin with the raw amino-acid sequence, 743 residues long: Merozoite surface protein 9 (743 aa).

An N-terminal signal peptide occupies residues 1 to 23; it reads MMNMKIVLFSLLLFVIRWNIISC. The segment at 77–235 is interaction with MSP1 and host SLC4A1/Band 3; sequence KELLKEKQYT…VNDEDDVNDE (159 aa). Disordered regions lie at residues 202 to 282, 459 to 487, 512 to 540, and 666 to 743; these read KSQG…ATAY, DNQA…PTED, NNTP…ENFD, and VDAL…EESK. A compositionally biased stretch (polar residues) spans 211 to 224; the sequence is SQNQNENNDNQKYQ. 8 repeat units span residues 226-231, 232-237, 238-243, 244-249, 250-255, 256-261, 262-267, and 268-273. Residues 226–273 are 8 X 6 AA tandem repeats of [VT]-N-D-[ED]-[ED]-D; sequence VNDEDDVNDEEDTNDDEDTNDEEDTNDDEDTNDDEDTNDEEDTNDEED. A compositionally biased stretch (acidic residues) spans 226-274; it reads VNDEDDVNDEEDTNDDEDTNDEEDTNDDEDTNDDEDTNDEEDTNDEEDH. Residues 364-528 form an interaction with MSP1 and host SLC4A1/Band 3 region; that stretch reads LKDNLINYEF…PPTQSKKKNK (165 aa). Positions 459–473 are enriched in basic and acidic residues; the sequence is DNQAVDTKSMEEPKV. Low complexity predominate over residues 512 to 521; it reads NNTPNVVPPT. Residues 644 to 732 adopt a coiled-coil conformation; sequence NQETEEEMEK…EEQEEEEEEI (89 aa). Residues 672–722 show a composition bias toward basic and acidic residues; that stretch reads KNKEEEEKEKEKEKEKEEKEKEEKEKEEKEKEKEEKEKEKEEKEEEKKEKE. Acidic residues predominate over residues 723-733; it reads EEQEEEEEEIV.

Belongs to the plasmodium ABRA family. As to quaternary structure, forms a complex composed of MSP1, MSP6, MSP7, MSP9 and MSP3; within the complex, MSP6 and MSP9 mediate the binding to the host erythrocyte. Interacts with MSP1 subunits p19 and p42; the interaction is direct. Interacts with host SLC4A1/Band 3 protein (via the 5ABC region). MSP1 subunits p19 or p42, and MSP9 form a co-ligand complex that interacts with host SLC4A1/Band 3 protein. Not glycosylated.

The protein resides in the cell membrane. Its subcellular location is the parasitophorous vacuole lumen. It localises to the secreted. Functionally, during the asexual blood stage, involved in the sialic acid-independent (SAID) merozoite invasion of host erythrocytes by binding to host SLC4A1/Band 3 protein on the surface of the host erythrocyte. The chain is Merozoite surface protein 9 from Plasmodium falciparum (isolate Camp / Malaysia).